Here is a 55-residue protein sequence, read N- to C-terminus: Large ribosomal subunit protein bL33 (55 aa).

This sequence belongs to the bacterial ribosomal protein bL33 family.

The protein is Large ribosomal subunit protein bL33 of Kocuria rhizophila (strain ATCC 9341 / DSM 348 / NBRC 103217 / DC2201).